A 91-amino-acid chain; its full sequence is Mercuric transport protein periplasmic component (91 aa).

The N-terminal stretch at 1–19 (MKKLFASLALAAAVAPVWA) is a signal peptide. The 67-residue stretch at 22 to 88 (QTVTLAVPGM…ATADAGYPSS (67 aa)) folds into the HMA domain. Hg(2+) is bound by residues cysteine 33 and cysteine 36.

Belongs to the MerP family. In terms of assembly, monomer.

Its subcellular location is the periplasm. Its function is as follows. Involved in mercury resistance. Acts as a mercury scavenger that specifically binds to a mercuric ion in the periplasm and probably passes it to the cytoplasmic mercuric reductase MerA via the mercuric transport protein MerT. The polypeptide is Mercuric transport protein periplasmic component (Shigella flexneri).